Here is a 571-residue protein sequence, read N- to C-terminus: Sporulation-specific protein 1 (571 aa).

3 disordered regions span residues 1 to 53 (MRSS…EEDV), 67 to 133 (MTAF…PYRQ), and 482 to 501 (KEAK…SQPE). Residues 23–37 (SKQKKPTKFRERMRR) show a composition bias toward basic residues. Composition is skewed to polar residues over residues 67–86 (MTAF…NNFF), 95–121 (PVQS…QNPK), and 486–499 (NISS…SISQ). Coiled coils occupy residues 469 to 486 (DQLV…EAKN) and 542 to 566 (ESAS…DENV).

As to quaternary structure, interacts directly with ADY3. Probable component of a spindle pole body (SPB) complex composed of ADY3, SSP1, DON1, MPC54, SPO21/MPC70, NUD1 and CNM67. Phosphorylated.

It localises to the prospore membrane. Involved in the pathway that organizes the shaping and sizing of the prospore membrane (PSM) during sporulation. May be required for the formation of ADY3 and DON1-containing protein coats at the leading edge of the PSMs during meiosis II. In Saccharomyces cerevisiae (strain ATCC 204508 / S288c) (Baker's yeast), this protein is Sporulation-specific protein 1 (SSP1).